Here is a 920-residue protein sequence, read N- to C-terminus: Coatomer subunit beta'-1 (920 aa).

WD repeat units follow at residues 13-52 (QRSERVKSVDLHPTEPWILASLYSGTLCIWNYQTQTMVKS), 55-94 (VTELPVRSAKFIARKQWVVAGADDMFIRVYNYNTMDKIKV), 97-136 (AHADYIRCVAVHPTLPYVLSSSDDMLIKLWDWEKGWLCTQ), 140-180 (GHSH…PNFT), 183-224 (AHLK…CVQT), 227-266 (GHTHNVSAVSFHPELPIIITGSEDGTVRIWHATTYRLENT), 350-392 (TCDL…GSAL), and 460-500 (RIDV…SYFD). Residues 850-920 (LEQGDVLDEV…EQWVLTPPQE (71 aa)) form a disordered region. Residues 854–875 (DVLDEVGEEGEDGEEEEEEDRQ) are compositionally biased toward acidic residues.

It belongs to the WD repeat COPB2 family. Oligomeric complex that consists of at least the alpha, beta, beta', gamma, delta, epsilon and zeta subunits.

Its subcellular location is the cytoplasm. The protein resides in the golgi apparatus membrane. It localises to the cytoplasmic vesicle. It is found in the COPI-coated vesicle membrane. Its function is as follows. The coatomer is a cytosolic protein complex that binds to dilysine motifs and reversibly associates with Golgi non-clathrin-coated vesicles, which further mediate biosynthetic protein transport from the ER, via the Golgi up to the trans Golgi network. Coatomer complex is required for budding from Golgi membranes, and is essential for the retrograde Golgi-to-ER transport of dilysine-tagged proteins. In Arabidopsis thaliana (Mouse-ear cress), this protein is Coatomer subunit beta'-1.